Here is a 96-residue protein sequence, read N- to C-terminus: Large ribosomal subunit protein uL23cz (96 aa).

Belongs to the universal ribosomal protein uL23 family. Part of the 50S ribosomal subunit.

It localises to the plastid. It is found in the chloroplast. In terms of biological role, binds to 23S rRNA. This Sorghum bicolor (Sorghum) protein is Large ribosomal subunit protein uL23cz (rpl23-A).